A 144-amino-acid chain; its full sequence is Large-conductance mechanosensitive channel (144 aa).

Helical transmembrane passes span 16-36 and 86-106; these read VIDLAVGVIIGAAFGKIVDSV and GNFLTIVVNFVILAFIIFMMV.

The protein belongs to the MscL family. Homopentamer.

It localises to the cell inner membrane. Its function is as follows. Channel that opens in response to stretch forces in the membrane lipid bilayer. May participate in the regulation of osmotic pressure changes within the cell. This Cupriavidus metallidurans (strain ATCC 43123 / DSM 2839 / NBRC 102507 / CH34) (Ralstonia metallidurans) protein is Large-conductance mechanosensitive channel.